The chain runs to 292 residues: Cyclin-dependent kinase 5 (292 aa).

Residues 4–286 enclose the Protein kinase domain; the sequence is YEKLEKIGEG…AEEALQHPYF (283 aa). ATP contacts are provided by residues 10–18 and K33; that span reads IGEGTYGTV. Y15 is subject to Phosphotyrosine; by ABL1, EPHA4 and FYN. T17 carries the post-translational modification Phosphothreonine. At K56 the chain carries N6-acetyllysine. S72 is subject to Phosphoserine. The active-site Proton acceptor is D126. The residue at position 159 (S159) is a Phosphoserine.

It belongs to the protein kinase superfamily. CMGC Ser/Thr protein kinase family. CDC2/CDKX subfamily. In terms of assembly, heterodimer composed of a catalytic subunit CDK5 and a regulatory subunit CDK5R1 (p25) and macromolecular complex composed of at least CDK5, CDK5R1 (p35) and CDK5RAP1 or CDK5RAP2 or CDK5RAP3. Only the heterodimer shows kinase activity. Under neurotoxic stress and neuronal injury conditions, p35 is cleaved by calpain to generate p25 that hyperactivates CDK5, that becomes functionally disabled and often toxic. Found in a trimolecular complex with CABLES1 and ABL1. Interacts with CABLES1 and CABLES2. Interacts with AATK and GSTP1. Binds to HDAC1 when in complex with p25. Interaction with myristoylation p35 promotes CDK5 association with membranes. Both isoforms 1 and 2 interacts with beta-catenin/CTNNB1. Interacts with delta-catenin/CTNND2 and APEX1. Interacts with P53/TP53 in neurons. Interacts with PTK2/FAK1. Interacts with EPHA4; may mediate the activation of NGEF by EPHA4. The complex p35/CDK5 interacts with CLOCK. Interacts with HTR6. Post-translationally, phosphorylation on Tyr-15 by ABL1 and FYN, and on Ser-159 by casein kinase 1 promotes kinase activity. By contrast, phosphorylation at Thr-14 inhibits activity. In terms of processing, phosphorylation at Ser-159 is essential for maximal catalytic activity. Expressed in hippocampal neuronal synaptic termini (at protein level). Expressed predominantly in post-mitotic neurons of the central and peripheral nervous system.

It localises to the cytoplasm. The protein resides in the nucleus. Its subcellular location is the cell membrane. The protein localises to the perikaryon. It is found in the cell projection. It localises to the lamellipodium. The protein resides in the growth cone. Its subcellular location is the postsynaptic density. The protein localises to the synapse. The enzyme catalyses L-seryl-[protein] + ATP = O-phospho-L-seryl-[protein] + ADP + H(+). It carries out the reaction L-threonyl-[protein] + ATP = O-phospho-L-threonyl-[protein] + ADP + H(+). Inhibited by 2-(1-ethyl-2-hydroxyethylamino)-6-benzylamino-9-isopropylpurine (roscovitine), 1-isopropyl-4-aminobenzyl-6-ether-linked benzimidazoles, resveratrol, AT-7519 and olomoucine. Activated by CDK5R1 (p35) and CDK5R2 (p39) during the development of the nervous system; degradation of CDK5R1 (p35) and CDK5R2 (p39) by proteasome result in down regulation of kinase activity, during this process, CDK5 phosphorylates p35 and induces its ubiquitination and subsequent degradation. Kinase activity is mainly determined by the amount of p35 available and subcellular location; reversible association to plasma membrane inhibits activity. Long-term inactivation as well as CDK5R1 (p25)-mediated hyperactivation of CDK5 triggers cell death. The pro-death activity of hyperactivated CDK5 is suppressed by membrane association of CDK5, via myristoylation of p35. Brain-derived neurotrophic factor, glial-derived neurotrophic factor, nerve growth factor (NGF), retinoic acid, laminin and neuregulin promote activity. Neurotoxicity enhances nuclear activity, thus leading to MEF2 phosphorylation and inhibition prior to apoptosis of cortical neurons. Repression by GSTP1 via p25/p35 translocation prevents neurodegeneration. Functionally, proline-directed serine/threonine-protein kinase essential for neuronal cell cycle arrest and differentiation and may be involved in apoptotic cell death in neuronal diseases by triggering abortive cell cycle re-entry. Interacts with D1 and D3-type G1 cyclins. Phosphorylates SRC, NOS3, VIM/vimentin, p35/CDK5R1, MEF2A, SIPA1L1, SH3GLB1, PXN, PAK1, MCAM/MUC18, SEPT5, SYN1, DNM1, AMPH, SYNJ1, CDK16, RAC1, RHOA, CDC42, TONEBP/NFAT5, MAPT/TAU, MAP1B, histone H1, p53/TP53, HDAC1, APEX1, PTK2/FAK1, huntingtin/HTT, ATM, MAP2, NEFH and NEFM. Regulates several neuronal development and physiological processes including neuronal survival, migration and differentiation, axonal and neurite growth, synaptogenesis, oligodendrocyte differentiation, synaptic plasticity and neurotransmission, by phosphorylating key proteins. Negatively regulates the CACNA1B/CAV2.2 -mediated Ca(2+) release probability at hippocampal neuronal soma and synaptic terminals. Activated by interaction with CDK5R1 (p35) and CDK5R2 (p39), especially in postmitotic neurons, and promotes CDK5R1 (p35) expression in an autostimulation loop. Phosphorylates many downstream substrates such as Rho and Ras family small GTPases (e.g. PAK1, RAC1, RHOA, CDC42) or microtubule-binding proteins (e.g. MAPT/TAU, MAP2, MAP1B), and modulates actin dynamics to regulate neurite growth and/or spine morphogenesis. Also phosphorylates exocytosis associated proteins such as MCAM/MUC18, SEPT5, SYN1, and CDK16/PCTAIRE1 as well as endocytosis associated proteins such as DNM1, AMPH and SYNJ1 at synaptic terminals. In the mature central nervous system (CNS), regulates neurotransmitter movements by phosphorylating substrates associated with neurotransmitter release and synapse plasticity; synaptic vesicle exocytosis, vesicles fusion with the presynaptic membrane, and endocytosis. Promotes cell survival by activating anti-apoptotic proteins BCL2 and STAT3, and negatively regulating of JNK3/MAPK10 activity. Phosphorylation of p53/TP53 in response to genotoxic and oxidative stresses enhances its stabilization by preventing ubiquitin ligase-mediated proteasomal degradation, and induces transactivation of p53/TP53 target genes, thus regulating apoptosis. Phosphorylation of p35/CDK5R1 enhances its stabilization by preventing calpain-mediated proteolysis producing p25/CDK5R1 and avoiding ubiquitin ligase-mediated proteasomal degradation. During aberrant cell-cycle activity and DNA damage, p25/CDK5 activity elicits cell-cycle activity and double-strand DNA breaks that precedes neuronal death by deregulating HDAC1. DNA damage triggered phosphorylation of huntingtin/HTT in nuclei of neurons protects neurons against polyglutamine expansion as well as DNA damage mediated toxicity. Phosphorylation of PXN reduces its interaction with PTK2/FAK1 in matrix-cell focal adhesions (MCFA) during oligodendrocytes (OLs) differentiation. Negative regulator of Wnt/beta-catenin signaling pathway. Activator of the GAIT (IFN-gamma-activated inhibitor of translation) pathway, which suppresses expression of a post-transcriptional regulon of proinflammatory genes in myeloid cells; phosphorylates the linker domain of glutamyl-prolyl tRNA synthetase (EPRS) in a IFN-gamma-dependent manner, the initial event in assembly of the GAIT complex. Phosphorylation of SH3GLB1 is required for autophagy induction in starved neurons. Phosphorylation of TONEBP/NFAT5 in response to osmotic stress mediates its rapid nuclear localization. MEF2 is inactivated by phosphorylation in nucleus in response to neurotoxin, thus leading to neuronal apoptosis. APEX1 AP-endodeoxyribonuclease is repressed by phosphorylation, resulting in accumulation of DNA damage and contributing to neuronal death. NOS3 phosphorylation down regulates NOS3-derived nitrite (NO) levels. SRC phosphorylation mediates its ubiquitin-dependent degradation and thus leads to cytoskeletal reorganization. May regulate endothelial cell migration and angiogenesis via the modulation of lamellipodia formation. Involved in dendritic spine morphogenesis by mediating the EFNA1-EPHA4 signaling. The complex p35/CDK5 participates in the regulation of the circadian clock by modulating the function of CLOCK protein: phosphorylates CLOCK at 'Thr-451' and 'Thr-461' and regulates the transcriptional activity of the CLOCK-BMAL1 heterodimer in association with altered stability and subcellular distribution. This Rattus norvegicus (Rat) protein is Cyclin-dependent kinase 5.